The sequence spans 258 residues: Protease HtpX homolog (258 aa).

Helical transmembrane passes span valine 24–glycine 44 and glycine 45–proline 65. Residue histidine 146 coordinates Zn(2+). Glutamate 147 is an active-site residue. A Zn(2+)-binding site is contributed by histidine 150. 2 helical membrane-spanning segments follow: residues isoleucine 157–valine 177 and leucine 186–serine 206. Position 210 (glutamate 210) interacts with Zn(2+).

This sequence belongs to the peptidase M48B family. Zn(2+) is required as a cofactor.

The protein resides in the cell membrane. This chain is Protease HtpX homolog, found in Methanothermobacter thermautotrophicus (strain ATCC 29096 / DSM 1053 / JCM 10044 / NBRC 100330 / Delta H) (Methanobacterium thermoautotrophicum).